Reading from the N-terminus, the 330-residue chain is MKKIAVDAMGGDYAPKAIVEGVNQAISDFSDIEVQLYGDQKKIEKYLTVTERVSIIHTEEKINSDDEPAKAVRRKKQSSMVLGAKAVKDGVAQAFISAGNTGALLAAGLFVVGRIKGVDRPGLMSTMPTLDGVGFDMLDLGANAENTASHLHQYAILGSFYAKNVRGIEIPRVGLLNNGTEETKGDSLHKEAYELLAAEPSINFIGNIEARDLMSSVADVVVTDGFTGNAVLKTMEGTAMSIMGSLKSSIKSGGVKAKLGALLLKDSLYQLKDNMDYSSAGGAVLFGLKAPIVKCHGSSDSKAVYSTLKQVRTMLETQVVDQLVDAFTDE.

This sequence belongs to the PlsX family. In terms of assembly, homodimer. Probably interacts with PlsY.

It localises to the cytoplasm. The catalysed reaction is a fatty acyl-[ACP] + phosphate = an acyl phosphate + holo-[ACP]. Its pathway is lipid metabolism; phospholipid metabolism. Its function is as follows. Catalyzes the reversible formation of acyl-phosphate (acyl-PO(4)) from acyl-[acyl-carrier-protein] (acyl-ACP). This enzyme utilizes acyl-ACP as fatty acyl donor, but not acyl-CoA. This chain is Phosphate acyltransferase, found in Streptococcus agalactiae serotype Ia (strain ATCC 27591 / A909 / CDC SS700).